Consider the following 501-residue polypeptide: Cytochrome P450 90A4 (501 aa).

Residues 2–22 (AAAALLLLAAAAAAVVVAMAL) traverse the membrane as a helical segment. C446 contributes to the heme binding site.

This sequence belongs to the cytochrome P450 family. Heme is required as a cofactor.

Its subcellular location is the membrane. It participates in plant hormone biosynthesis; brassinosteroid biosynthesis. Its function is as follows. Catalyzes the C23-alpha-hydroxylation step in brassinosteroid biosynthesis. Converts 6-deoxocathasterone to 6-deoxoteasterone in the late C6-oxidation pathway and cathasterone to teasterone (TE) in the early C6-oxidation pathway of brassinolide (BL) biosynthesis. The polypeptide is Cytochrome P450 90A4 (Oryza sativa subsp. indica (Rice)).